Consider the following 219-residue polypeptide: Ribose-5-phosphate isomerase A (219 aa).

Residues 28 to 31 (TGST), 81 to 84 (DGAD), and 94 to 97 (KGGG) each bind substrate. Residue Glu-103 is the Proton acceptor of the active site. Lys-121 is a substrate binding site.

The protein belongs to the ribose 5-phosphate isomerase family. In terms of assembly, homodimer.

The catalysed reaction is aldehydo-D-ribose 5-phosphate = D-ribulose 5-phosphate. The protein operates within carbohydrate degradation; pentose phosphate pathway; D-ribose 5-phosphate from D-ribulose 5-phosphate (non-oxidative stage): step 1/1. In terms of biological role, catalyzes the reversible conversion of ribose-5-phosphate to ribulose 5-phosphate. In Shewanella sp. (strain ANA-3), this protein is Ribose-5-phosphate isomerase A.